Consider the following 341-residue polypeptide: Ketol-acid reductoisomerase (NADP(+)) (341 aa).

The 181-residue stretch at 1 to 181 folds into the KARI N-terminal Rossmann domain; the sequence is MARVYREGDI…GCARAGVLET (181 aa). Residues 24 to 27, Ser-50, Ser-52, and 82 to 85 contribute to the NADP(+) site; these read FGSQ and DERQ. His-107 is an active-site residue. Residue Gly-133 participates in NADP(+) binding. Residues 182–327 form the KARI C-terminal knotted domain; sequence TFAEETETDL…AELRALAAEG (146 aa). 4 residues coordinate Mg(2+): Asp-190, Glu-194, Glu-226, and Glu-230. Ser-251 contributes to the substrate binding site.

Belongs to the ketol-acid reductoisomerase family. Requires Mg(2+) as cofactor.

It catalyses the reaction (2R)-2,3-dihydroxy-3-methylbutanoate + NADP(+) = (2S)-2-acetolactate + NADPH + H(+). The enzyme catalyses (2R,3R)-2,3-dihydroxy-3-methylpentanoate + NADP(+) = (S)-2-ethyl-2-hydroxy-3-oxobutanoate + NADPH + H(+). The protein operates within amino-acid biosynthesis; L-isoleucine biosynthesis; L-isoleucine from 2-oxobutanoate: step 2/4. Its pathway is amino-acid biosynthesis; L-valine biosynthesis; L-valine from pyruvate: step 2/4. Functionally, involved in the biosynthesis of branched-chain amino acids (BCAA). Catalyzes an alkyl-migration followed by a ketol-acid reduction of (S)-2-acetolactate (S2AL) to yield (R)-2,3-dihydroxy-isovalerate. In the isomerase reaction, S2AL is rearranged via a Mg-dependent methyl migration to produce 3-hydroxy-3-methyl-2-ketobutyrate (HMKB). In the reductase reaction, this 2-ketoacid undergoes a metal-dependent reduction by NADPH to yield (R)-2,3-dihydroxy-isovalerate. In Rubrobacter xylanophilus (strain DSM 9941 / JCM 11954 / NBRC 16129 / PRD-1), this protein is Ketol-acid reductoisomerase (NADP(+)).